A 607-amino-acid chain; its full sequence is Zinc finger protein 750 (607 aa).

The CCHC-type zinc-finger motif lies at 25-51; sequence YQCFQCPFTCNIKSHLFNHMKYNLCKN. Residues C27, C30, H43, and C49 each contribute to the Zn(2+) site. Residues 60–78 are compositionally biased toward polar residues; the sequence is MEQTGKASRASQHSPAFSH. 4 disordered regions span residues 60-133, 318-467, 482-511, and 575-607; these read MEQT…DKSE, RAVQ…SSQE, QALP…QDLE, and GQKR…SQNC. Basic and acidic residues-rich tracts occupy residues 79–133 and 318–334; these read NSKE…DKSE and RAVQ…RESP. The segment covering 369-380 has biased composition (low complexity); sequence HSGSQSHIISGS. A compositionally biased stretch (acidic residues) spans 421–432; it reads DKEEDEETEEEI. Basic and acidic residues predominate over residues 452–462; the sequence is HYPDRELHYDS. Residues 496–507 show a composition bias toward polar residues; it reads ISNAEVSTTESP. Basic residues predominate over residues 579-592; it reads ANNRPLRHTNKRAK.

It localises to the nucleus. In terms of biological role, transcription factor involved in epidermis differentiation. This Danio rerio (Zebrafish) protein is Zinc finger protein 750 (znf750).